The chain runs to 132 residues: Agouti-signaling protein (132 aa).

The first 22 residues, 1-22 (MDVTRLLLATLLVFLCFFTANS), serve as a signal peptide directing secretion. Asn-39 is a glycosylation site (N-linked (GlcNAc...) asparagine). Residues 62-85 (IGRKAAEKKRSSKKEASMKKVVRP) are disordered. Over residues 65–79 (KAAEKKRSSKKEASM) the composition is skewed to basic and acidic residues. 5 disulfides stabilise this stretch: Cys-93–Cys-108, Cys-100–Cys-114, Cys-107–Cys-125, Cys-111–Cys-132, and Cys-116–Cys-123. Positions 93-132 (CVATRNSCKPPAPACCDPCASCQCRFFRSACSCRVLSLNC) constitute an Agouti domain.

Widely expressed at low levels. Highly expressed in the skin. Expressed in adipose tissue.

The protein localises to the secreted. Involved in the regulation of melanogenesis. The binding of ASP to MC1R precludes alpha-MSH initiated signaling and thus blocks production of cAMP, leading to a down-regulation of eumelanogenesis (brown/black pigment) and thus increasing synthesis of pheomelanin (yellow/red pigment). In higher primates, agouti may affect the quality of hair pigmentation rather than its pattern of deposition. Could well play a role in neuroendocrine aspects of melanocortin action. May have some functional role in regulating the lipid metabolism with adipocytes. This is Agouti-signaling protein (ASIP) from Homo sapiens (Human).